Consider the following 70-residue polypeptide: Protein SlyX homolog (70 aa).

The segment at 51–70 (RMREAEANRPGPTNEPPPHY) is disordered.

It belongs to the SlyX family.

The chain is Protein SlyX homolog from Nitrobacter hamburgensis (strain DSM 10229 / NCIMB 13809 / X14).